Reading from the N-terminus, the 579-residue chain is Leucine-rich repeat-containing protein 15 (579 aa).

A signal peptide spans M1–A21. The LRRNT domain occupies Y22–W53. The Extracellular portion of the chain corresponds to Y22–G536. LRR repeat units lie at residues N54–N75, A78–N99, S102–D123, N126–Q147, N150–H171, G174–H195, N198–A219, N222–N243, N246–Q267, H270–P291, N294–H315, Q318–G339, N342–S363, N366–N387, and G390–H411. N75 carries an N-linked (GlcNAc...) asparagine glycan. N-linked (GlcNAc...) asparagine glycosylation occurs at N369. In terms of domain architecture, LRRCT spans N423 to G473. The disordered stretch occupies residues V476 to T509. The segment covering S485–T506 has biased composition (low complexity). Residues L537–I557 form a helical membrane-spanning segment. Over C558–C579 the chain is Cytoplasmic.

As to expression, expressed in chodrocytes (at protein level).

The protein localises to the cell membrane. The polypeptide is Leucine-rich repeat-containing protein 15 (Lrrc15) (Mus musculus (Mouse)).